The chain runs to 132 residues: Mercuric resistance operon regulatory protein (132 aa).

Residues 2–71 (KFRIGELADK…LNEIDKLLGV (70 aa)) form the HTH merR-type domain. The H-T-H motif DNA-binding region spans 5 to 24 (IGELADKCGVNKETIRYYER). Hg(2+)-binding residues include cysteine 79, cysteine 114, and cysteine 123.

In terms of assembly, homodimer.

In terms of biological role, mediates the mercuric-dependent induction of mercury resistance operon. In the absence of mercury MerR represses transcription by binding tightly to the mer operator region; when mercury is present the dimeric complex binds a single ion and becomes a potent transcriptional activator, while remaining bound to the mer site. This is Mercuric resistance operon regulatory protein (merR1) from Bacillus cereus.